We begin with the raw amino-acid sequence, 139 residues long: uncharacterized protein (139 aa).

The next 3 helical transmembrane spans lie at 38-60 (YFLHRMVVCLGVLLCAASLLYVF), 72-94 (FIILRSCVGCSVLLVVACLCAGS), and 114-136 (ITVVALLFGMGALVFNTVVLIVA).

It is found in the cell membrane. This is an uncharacterized protein from Treponema pallidum (strain Nichols).